The following is a 555-amino-acid chain: Dihydroxy-acid dehydratase (555 aa).

A Mg(2+)-binding site is contributed by Asp-78. Residue Cys-119 coordinates [2Fe-2S] cluster. 2 residues coordinate Mg(2+): Asp-120 and Lys-121. Lys-121 carries the post-translational modification N6-carboxylysine. [2Fe-2S] cluster is bound at residue Cys-195. Mg(2+) is bound at residue Glu-444. Ser-470 serves as the catalytic Proton acceptor.

This sequence belongs to the IlvD/Edd family. Homodimer. Requires [2Fe-2S] cluster as cofactor. Mg(2+) is required as a cofactor.

The enzyme catalyses (2R)-2,3-dihydroxy-3-methylbutanoate = 3-methyl-2-oxobutanoate + H2O. It carries out the reaction (2R,3R)-2,3-dihydroxy-3-methylpentanoate = (S)-3-methyl-2-oxopentanoate + H2O. Its pathway is amino-acid biosynthesis; L-isoleucine biosynthesis; L-isoleucine from 2-oxobutanoate: step 3/4. The protein operates within amino-acid biosynthesis; L-valine biosynthesis; L-valine from pyruvate: step 3/4. Its function is as follows. Functions in the biosynthesis of branched-chain amino acids. Catalyzes the dehydration of (2R,3R)-2,3-dihydroxy-3-methylpentanoate (2,3-dihydroxy-3-methylvalerate) into 2-oxo-3-methylpentanoate (2-oxo-3-methylvalerate) and of (2R)-2,3-dihydroxy-3-methylbutanoate (2,3-dihydroxyisovalerate) into 2-oxo-3-methylbutanoate (2-oxoisovalerate), the penultimate precursor to L-isoleucine and L-valine, respectively. This chain is Dihydroxy-acid dehydratase, found in Dehalococcoides mccartyi (strain CBDB1).